The chain runs to 197 residues: MPKVGMQPIRRSQLIHATLEAVDQVGMGDASIALIARLAGVSNGIISHYFQDKNGLLEATMRHLLSALSKAVRERRAALYDDSPRAHLRAIVEGNFDDSQVNGPAMKTWLAFWATSMHQPALRRLQRVNDHRLYSNLCYQFRRQLSADDARAAARGLAALIDGLWLRGALTGDAFDTDEALNIAYDYLDQQLAKQSG.

Residues 8–68 (PIRRSQLIHA…ATMRHLLSAL (61 aa)) enclose the HTH tetR-type domain. The H-T-H motif DNA-binding region spans 31–50 (SIALIARLAGVSNGIISHYF).

It participates in amine and polyamine biosynthesis; betaine biosynthesis via choline pathway [regulation]. Repressor involved in the biosynthesis of the osmoprotectant glycine betaine. It represses transcription of the choline transporter BetT and the genes of BetAB involved in the synthesis of glycine betaine. The polypeptide is HTH-type transcriptional regulator BetI (Pseudomonas aeruginosa (strain LESB58)).